A 131-amino-acid polypeptide reads, in one-letter code: Glycine cleavage system H protein (131 aa).

Residues Arg-24–Glu-106 form the Lipoyl-binding domain. Residue Lys-65 is modified to N6-lipoyllysine.

It belongs to the GcvH family. In terms of assembly, the glycine cleavage system is composed of four proteins: P, T, L and H. It depends on (R)-lipoate as a cofactor.

The glycine cleavage system catalyzes the degradation of glycine. The H protein shuttles the methylamine group of glycine from the P protein to the T protein. This Stenotrophomonas maltophilia (strain R551-3) protein is Glycine cleavage system H protein.